The chain runs to 527 residues: MTTQAAEVAKRRTFAIISHPDAGKTTITEKLLLMGKAIEVAGTVKSRKSDRHATSDWMEMEKQRGISITTSVMQFPYREHIVNLLDTPGHEDFSEDTYRTLTAVDSALMVLDGGKGVEPRTIALMDVCRLRDTPIVSFINKLDRDIRDPIELLDEIEAVLKIKAAPITWPIGCYKDFKGVYHLSGDYIVVYTPGHGHERTEAKIIQKLDSDEARDHLGDMYERFVEELELVQGACHEFEPEAFLKGEMTPVFFGTALGNFGVDHVLDAVVDWAPRPLPRAANERTVEPTEEKFSGFVFKIQANMDPKHRDRIAFMRICSGKYTQGMKMRHARLGKDVRVGDALTFFSSEREHLEEAYAGDIIGLHNHGTIQIGDTFTEGENLGFTGIPHFAPELFRRVRLKDPLKSKQLRQGLQELAEEGATQVFFPERNNDIVLGAVGVLQFDVVASRLKEEYKVECAYEAINVWSARWIECSDEKKLKEFKDKAYENLAVDGGGHLTYLAPTRVNLSLMEERWPEIKFRATREHH.

Residues 9–277 enclose the tr-type G domain; sequence AKRRTFAIIS…AVVDWAPRPL (269 aa). GTP is bound by residues 18-25, 86-90, and 140-143; these read SHPDAGKT, DTPGH, and NKLD.

This sequence belongs to the TRAFAC class translation factor GTPase superfamily. Classic translation factor GTPase family. PrfC subfamily.

It is found in the cytoplasm. Increases the formation of ribosomal termination complexes and stimulates activities of RF-1 and RF-2. It binds guanine nucleotides and has strong preference for UGA stop codons. It may interact directly with the ribosome. The stimulation of RF-1 and RF-2 is significantly reduced by GTP and GDP, but not by GMP. The sequence is that of Peptide chain release factor 3 from Ectopseudomonas mendocina (strain ymp) (Pseudomonas mendocina).